Reading from the N-terminus, the 485-residue chain is NADH-quinone oxidoreductase subunit N (485 aa).

14 helical membrane passes run 8-28, 35-55, 78-98, 104-124, 125-145, 159-179, 203-223, 235-255, 271-291, 297-317, 327-347, 374-394, 408-427, and 449-469; these read LIAL…MLGI, FINA…LYFV, GLVI…LVGY, EFYL…SANH, LASL…LVGY, YMLL…LLYA, VLAG…LVPF, PAPV…AVVM, MVLS…AISQ, LLGY…IAVQ, GVYL…VSLM, AVMT…GFIG, WWLT…YYLR, and ALTA…LLGV.

The protein belongs to the complex I subunit 2 family. NDH-1 is composed of 13 different subunits. Subunits NuoA, H, J, K, L, M, N constitute the membrane sector of the complex.

Its subcellular location is the cell inner membrane. It carries out the reaction a quinone + NADH + 5 H(+)(in) = a quinol + NAD(+) + 4 H(+)(out). Its function is as follows. NDH-1 shuttles electrons from NADH, via FMN and iron-sulfur (Fe-S) centers, to quinones in the respiratory chain. The immediate electron acceptor for the enzyme in this species is believed to be ubiquinone. Couples the redox reaction to proton translocation (for every two electrons transferred, four hydrogen ions are translocated across the cytoplasmic membrane), and thus conserves the redox energy in a proton gradient. This is NADH-quinone oxidoreductase subunit N from Serratia proteamaculans (strain 568).